The sequence spans 73 residues: MKISCFLLMIFFLSCFQINPVAVLDTIKCLQGNNNCHIQKCPWFLLQVSTCYKGKGRCCQKRRWFARSHVYHV.

The N-terminal stretch at 1–23 (MKISCFLLMIFFLSCFQINPVAV) is a signal peptide. Cystine bridges form between C29–C58, C36–C51, and C41–C59.

The protein belongs to the beta-defensin family. As to expression, only expressed in epididymis (corpus, cauda and caput).

The protein localises to the secreted. Its function is as follows. Has antibacterial activity. This Mus musculus (Mouse) protein is Beta-defensin 40 (Defb40).